We begin with the raw amino-acid sequence, 374 residues long: 4-hydroxybenzoate polyprenyltransferase, mitochondrial (374 aa).

The N-terminal 63 residues, 1-63 (MLRLGGAGLV…RALSLSAAAV (63 aa)), are a transit peptide targeting the mitochondrion. Topologically, residues 64–83 (VNSAPRPLQPYLRLMRLDKP) are mitochondrial matrix. A helical transmembrane segment spans residues 84-104 (IGTWLLYLPCTWSIGLAADPG). Residues 105 to 108 (CFPD) are Mitochondrial intermembrane-facing. A helical membrane pass occupies residues 109–129 (WYMLSLFGTGAILMRGAGCTI). At 130-153 (NDMWDRDFDKKVERTANRPIAAGD) the chain is on the mitochondrial matrix side. Residues 154-174 (ISAFQSFVFLGAQLTLALGVL) form a helical membrane-spanning segment. The Mitochondrial intermembrane segment spans residues 175–176 (LH). Residues 177 to 197 (LNYYSIAMGAASLLLVVTYPL) traverse the membrane as a helical segment. The Mitochondrial matrix segment spans residues 198–200 (MKR). The chain crosses the membrane as a helical span at residues 201–221 (VTFWPQLALGLTFNWGALLGW). Over 222-230 (SAVKGSCDP) the chain is Mitochondrial intermembrane. A helical transmembrane segment spans residues 231–251 (AVCLPLYFSGVMWTLIYDTIY). Over 252 to 277 (AHQDKKDDALIGLKSTALLFRENTKQ) the chain is Mitochondrial matrix. Residues 278 to 298 (WLSGFGVAMVGALSLVGASSG) form a helical membrane-spanning segment. The Mitochondrial intermembrane segment spans residues 299–300 (QT). A helical transmembrane segment spans residues 301–321 (LPYYAAVAAVGAHLAHQIYTV). Topologically, residues 322–332 (DIHRAEDCWEK) are mitochondrial matrix. The helical transmembrane segment at 333–353 (FTSNRTVGLLLFLGIVLGNLY) threads the bilayer. At 354 to 374 (KDKPDETKGVDAVGEESERTS) the chain is on the mitochondrial intermembrane side.

The protein belongs to the UbiA prenyltransferase family. Mg(2+) is required as a cofactor.

It is found in the mitochondrion inner membrane. The enzyme catalyses an all-trans-polyprenyl diphosphate + 4-hydroxybenzoate = a 4-hydroxy-3-(all-trans-polyprenyl)benzoate + diphosphate. The catalysed reaction is all-trans-decaprenyl diphosphate + 4-hydroxybenzoate = 4-hydroxy-3-(all-trans-decaprenyl)benzoate + diphosphate. It carries out the reaction all-trans-nonaprenyl diphosphate + 4-hydroxybenzoate = 4-hydroxy-3-(all-trans-nonaprenyl)benzoate + diphosphate. Its pathway is cofactor biosynthesis; ubiquinone biosynthesis. In terms of biological role, mediates the second step in the final reaction sequence of coenzyme Q (CoQ) biosynthesis. Catalyzes the prenylation of para-hydroxybenzoate (PHB) with an all-trans polyprenyl group (such as all-trans-nonaprenyl diphosphate). The length of the polyprenyl side chain varies depending on the species, in humans, the side chain is comprised of 10 isoprenyls producing CoQ10 (also known as ubiquinone), whereas rodents predominantly generate CoQ9. However, this specificity is not complete, human tissues have low amounts of CoQ9 and rodent organs contain some CoQ10. Plays a central role in the biosynthesis of CoQ9. CoQ9 is a vital molecule that transports electrons from mitochondrial respiratory chain complexes. CoQs also function as cofactors for uncoupling protein and plays a role as regulator of the extracellularly-induced ceramide-dependent apoptotic pathway. Regulates mitochondrial permeability transition pore (mPTP) opening and ROS production (pivotal events in cell death) in a tissue specific manner. The chain is 4-hydroxybenzoate polyprenyltransferase, mitochondrial from Rattus norvegicus (Rat).